The following is a 91-amino-acid chain: uncharacterized protein (91 aa).

Helical transmembrane passes span 22–42 and 53–73; these read WPVI…AFVV and VAGL…LAAA.

It is found in the cell membrane. This is an uncharacterized protein from Mycobacterium bovis (strain ATCC BAA-935 / AF2122/97).